The following is a 110-amino-acid chain: Hydrogenase maturation factor HypA (110 aa).

Position 2 (His-2) interacts with Ni(2+). Residues Cys-70, Cys-73, Cys-86, and Cys-89 each coordinate Zn(2+).

This sequence belongs to the HypA/HybF family.

In terms of biological role, involved in the maturation of [NiFe] hydrogenases. Required for nickel insertion into the metal center of the hydrogenase. The protein is Hydrogenase maturation factor HypA of Geotalea daltonii (strain DSM 22248 / JCM 15807 / FRC-32) (Geobacter daltonii).